Consider the following 294-residue polypeptide: G-protein coupled receptor homolog U51 (294 aa).

The Extracellular segment spans residues 1–14 (MKNIDLTNWKLLAE). The helical transmembrane segment at 15–35 (IYEYLFFFSFFFLCLLVIIVV) threads the bilayer. Over 36–47 (KFNNSTVGREYT) the chain is Cytoplasmic. The helical transmembrane segment at 48 to 68 (FSTFSGMLVYILLLPVKMGML) threads the bilayer. The Extracellular portion of the chain corresponds to 69–79 (TKMWDVSTDYC). The chain crosses the membrane as a helical span at residues 80–102 (IILMFLSDFSFIFSSWALTLLAL). At 103-119 (ERINNFSFSEIKVNETK) the chain is on the cytoplasmic side. A helical membrane pass occupies residues 120-140 (ILKQMSFPIIWVTSIFQAVQI). The Extracellular portion of the chain corresponds to 141-166 (SMKYKKSQMNLEDDYCLLAIERSAEE). Residues 167-187 (AWILLMYTVVIPTFIVFFYVL) traverse the membrane as a helical segment. The Cytoplasmic portion of the chain corresponds to 188-200 (NKRFLFLERDLNS). A helical transmembrane segment spans residues 201 to 221 (IVTHLSLFLFFGALCFFPASV). The Extracellular portion of the chain corresponds to 222-236 (LNEFNCNRLFYGLHE). The chain crosses the membrane as a helical span at residues 237 to 257 (LLIVCLELKIFYVPTMTYIIS). The Cytoplasmic portion of the chain corresponds to 258–294 (CENYRLAAKAFFCKCFKPCFLMPSLRKLQQPTKSTQF).

The protein belongs to the G-protein coupled receptor 1 family.

It localises to the host cell membrane. This Human herpesvirus 7 (strain JI) (HHV-7) protein is G-protein coupled receptor homolog U51 (U51).